Reading from the N-terminus, the 148-residue chain is Ergosterol biosynthetic protein 28 (148 aa).

Residues 1–25 (MFSLQDVITTTKTTLAAMPKGYLPK) are Cytoplasmic-facing. A helical membrane pass occupies residues 26 to 46 (WLLFISIVSVFNSIQTYVSGL). At 47–92 (ELTRKVYERKPTETTHLSARTFGTWTFISCVIRFYGAMYLNEPHIF) the chain is on the lumenal side. The chain crosses the membrane as a helical span at residues 93–113 (ELVFMSYMVALFHFGSELLIF). The Cytoplasmic portion of the chain corresponds to 114–120 (RTCKLGK). A helical transmembrane segment spans residues 121–136 (GFMGPLVVSTTSLVWM). Topologically, residues 137 to 148 (YKQREYYTGVAW) are lumenal.

Belongs to the ERG28 family. As to quaternary structure, heterotetramer of ERG25, ERG26, ERG27 and ERG28. ERG28 acts as a scaffold to tether ERG27 and other 4,4-demethylation-related enzymes, forming a demethylation enzyme complex, in the endoplasmic reticulum. Interacts with ERG25, ERG26 and ERG27. Also interacts with ERG1, ERG3, ERG5, ERG6 and ERG11.

It is found in the endoplasmic reticulum membrane. Part of the third module of ergosterol biosynthesis pathway that includes the late steps of the pathway. ERG28 has a role as a scaffold to help anchor the catalytic components of the C-4 demethylation complex ERG25, ERG26 and ERG27 to the endoplasmic reticulum. The third module or late pathway involves the ergosterol synthesis itself through consecutive reactions that mainly occur in the endoplasmic reticulum (ER) membrane. Firstly, the squalene synthase ERG9 catalyzes the condensation of 2 farnesyl pyrophosphate moieties to form squalene, which is the precursor of all steroids. Squalene synthase is crucial for balancing the incorporation of farnesyl diphosphate (FPP) into sterol and nonsterol isoprene synthesis. Secondly, the squalene epoxidase ERG1 catalyzes the stereospecific oxidation of squalene to (S)-2,3-epoxysqualene, which is considered to be a rate-limiting enzyme in steroid biosynthesis. Then, the lanosterol synthase ERG7 catalyzes the cyclization of (S)-2,3 oxidosqualene to lanosterol, a reaction that forms the sterol core. In the next steps, lanosterol is transformed to zymosterol through a complex process involving various demethylation, reduction and desaturation reactions. The lanosterol 14-alpha-demethylase ERG11 (also known as CYP51) catalyzes C14-demethylation of lanosterol to produce 4,4'-dimethyl cholesta-8,14,24-triene-3-beta-ol, which is critical for ergosterol biosynthesis. The C-14 reductase ERG24 reduces the C14=C15 double bond of 4,4-dimethyl-cholesta-8,14,24-trienol to produce 4,4-dimethyl-cholesta-8,24-dienol. 4,4-dimethyl-cholesta-8,24-dienol is substrate of the C-4 demethylation complex ERG25-ERG26-ERG27 in which ERG25 catalyzes the three-step monooxygenation required for the demethylation of 4,4-dimethyl and 4alpha-methylsterols, ERG26 catalyzes the oxidative decarboxylation that results in a reduction of the 3-beta-hydroxy group at the C-3 carbon to an oxo group, and ERG27 is responsible for the reduction of the keto group on the C-3. ERG28 has a role as a scaffold to help anchor ERG25, ERG26 and ERG27 to the endoplasmic reticulum and ERG29 regulates the activity of the iron-containing C4-methylsterol oxidase ERG25. Then, the sterol 24-C-methyltransferase ERG6 catalyzes the methyl transfer from S-adenosyl-methionine to the C-24 of zymosterol to form fecosterol. The C-8 sterol isomerase ERG2 catalyzes the reaction which results in unsaturation at C-7 in the B ring of sterols and thus converts fecosterol to episterol. The sterol-C5-desaturase ERG3 then catalyzes the introduction of a C-5 double bond in the B ring to produce 5-dehydroepisterol. The C-22 sterol desaturase ERG5 further converts 5-dehydroepisterol into ergosta-5,7,22,24(28)-tetraen-3beta-ol by forming the C-22(23) double bond in the sterol side chain. Finally, ergosta-5,7,22,24(28)-tetraen-3beta-ol is substrate of the C-24(28) sterol reductase ERG4 to produce ergosterol. In Saccharomyces cerevisiae (strain ATCC 204508 / S288c) (Baker's yeast), this protein is Ergosterol biosynthetic protein 28.